The primary structure comprises 201 residues: Large ribosomal subunit protein uL4 (201 aa).

The interval 42 to 67 is disordered; that stretch reads GNSAQKTRSEVSGGGKKPWNQKGTGR.

Belongs to the universal ribosomal protein uL4 family. As to quaternary structure, part of the 50S ribosomal subunit.

One of the primary rRNA binding proteins, this protein initially binds near the 5'-end of the 23S rRNA. It is important during the early stages of 50S assembly. It makes multiple contacts with different domains of the 23S rRNA in the assembled 50S subunit and ribosome. Functionally, forms part of the polypeptide exit tunnel. In Legionella pneumophila (strain Corby), this protein is Large ribosomal subunit protein uL4.